The primary structure comprises 100 residues: MLVMNLQLFAHKKGVGSSKNGRDSEAKRLGVKCSDGQFVLAGNILVRQRGTKIHPGLNVGRGGDDTLFAKIDGVVKYERLGRDKKKASVYPVEVEKVVAE.

Positions 1–9 (MLVMNLQLF) are excised as a propeptide.

The protein belongs to the bacterial ribosomal protein bL27 family. Post-translationally, the N-terminus is cleaved by ribosomal processing cysteine protease Prp.

The sequence is that of Large ribosomal subunit protein bL27 from Clostridium botulinum (strain 657 / Type Ba4).